Reading from the N-terminus, the 272-residue chain is 2-amino-3,7-dideoxy-D-threo-hept-6-ulosonate synthase (272 aa).

The active-site Proton acceptor is the Asp-33. 1-deoxy-D-threo-hexo-2,5-diulose 6-phosphate-binding positions include 33-37 and 153-155; these read DHGVS and YPR. Tyr-153 (proton donor) is an active-site residue. Residue Lys-184 is the Schiff-base intermediate with substrate of the active site. 1-deoxy-D-threo-hexo-2,5-diulose 6-phosphate-binding positions include 209–210 and 237–238; these read GG and GR.

It belongs to the DeoC/FbaB aldolase family. ADHS subfamily. As to quaternary structure, homodecamer.

It carries out the reaction 1-deoxy-D-threo-hexo-2,5-diulose 6-phosphate + L-aspartate 4-semialdehyde = 2,3-dioxopropyl phosphate + 2-amino-2,3,7-trideoxy-D-lyxo-hept-6-ulosonate. Functionally, catalyzes a transaldol reaction between 6-deoxy-5-ketofructose 1-phosphate (DKFP) and L-aspartate semialdehyde (ASA) with an elimination of hydroxypyruvaldehyde phosphate to yield 2-amino-3,7-dideoxy-D-threo-hept-6-ulosonate (ADH). Plays a key role in an alternative pathway of the biosynthesis of 3-dehydroquinate (DHQ), which is involved in the canonical pathway for the biosynthesis of aromatic amino acids and which is also a precursor for the biosynthesis of p-aminobenzoic acid (PABA) in M.maripaludis. Does not possess fructose-bisphosphate (FBP) aldolase activity. In Methanococcus maripaludis (strain DSM 14266 / JCM 13030 / NBRC 101832 / S2 / LL), this protein is 2-amino-3,7-dideoxy-D-threo-hept-6-ulosonate synthase.